The chain runs to 293 residues: Aspartate carbamoyltransferase catalytic subunit (293 aa).

Carbamoyl phosphate contacts are provided by arginine 50 and threonine 51. Lysine 78 is a binding site for L-aspartate. Carbamoyl phosphate is bound by residues arginine 100, histidine 127, and glutamine 130. Positions 160 and 210 each coordinate L-aspartate. Residues alanine 253 and proline 254 each coordinate carbamoyl phosphate.

The protein belongs to the aspartate/ornithine carbamoyltransferase superfamily. ATCase family. In terms of assembly, heterododecamer (2C3:3R2) of six catalytic PyrB chains organized as two trimers (C3), and six regulatory PyrI chains organized as three dimers (R2).

It catalyses the reaction carbamoyl phosphate + L-aspartate = N-carbamoyl-L-aspartate + phosphate + H(+). It participates in pyrimidine metabolism; UMP biosynthesis via de novo pathway; (S)-dihydroorotate from bicarbonate: step 2/3. Catalyzes the condensation of carbamoyl phosphate and aspartate to form carbamoyl aspartate and inorganic phosphate, the committed step in the de novo pyrimidine nucleotide biosynthesis pathway. The protein is Aspartate carbamoyltransferase catalytic subunit of Staphylococcus aureus (strain USA300).